A 150-amino-acid chain; its full sequence is 6,7-dimethyl-8-ribityllumazine synthase (150 aa).

Residues F11, 43-45 (VYD), and 67-69 (AVI) contribute to the 5-amino-6-(D-ribitylamino)uracil site. 72–73 (AT) lines the (2S)-2-hydroxy-3-oxobutyl phosphate pocket. H75 (proton donor) is an active-site residue. L100 is a 5-amino-6-(D-ribitylamino)uracil binding site. Residue R115 coordinates (2S)-2-hydroxy-3-oxobutyl phosphate.

Belongs to the DMRL synthase family.

It carries out the reaction (2S)-2-hydroxy-3-oxobutyl phosphate + 5-amino-6-(D-ribitylamino)uracil = 6,7-dimethyl-8-(1-D-ribityl)lumazine + phosphate + 2 H2O + H(+). It functions in the pathway cofactor biosynthesis; riboflavin biosynthesis; riboflavin from 2-hydroxy-3-oxobutyl phosphate and 5-amino-6-(D-ribitylamino)uracil: step 1/2. Its function is as follows. Catalyzes the formation of 6,7-dimethyl-8-ribityllumazine by condensation of 5-amino-6-(D-ribitylamino)uracil with 3,4-dihydroxy-2-butanone 4-phosphate. This is the penultimate step in the biosynthesis of riboflavin. The sequence is that of 6,7-dimethyl-8-ribityllumazine synthase from Pyrobaculum arsenaticum (strain DSM 13514 / JCM 11321 / PZ6).